The sequence spans 99 residues: DNA-binding protein Fis (99 aa).

The segment at residues 75–94 is a DNA-binding region (H-T-H motif); the sequence is QTRAANMLGINRGTLRKKLK.

The protein belongs to the transcriptional regulatory Fis family. In terms of assembly, homodimer.

In terms of biological role, activates ribosomal RNA transcription. Plays a direct role in upstream activation of rRNA promoters. The protein is DNA-binding protein Fis of Haemophilus influenzae (strain 86-028NP).